The primary structure comprises 314 residues: Ribosomal RNA small subunit methyltransferase H (314 aa).

Residues 36–38 (GGH), D56, F81, D103, and Q110 each bind S-adenosyl-L-methionine.

It belongs to the methyltransferase superfamily. RsmH family.

The protein resides in the cytoplasm. The enzyme catalyses cytidine(1402) in 16S rRNA + S-adenosyl-L-methionine = N(4)-methylcytidine(1402) in 16S rRNA + S-adenosyl-L-homocysteine + H(+). Its function is as follows. Specifically methylates the N4 position of cytidine in position 1402 (C1402) of 16S rRNA. This Shewanella sediminis (strain HAW-EB3) protein is Ribosomal RNA small subunit methyltransferase H.